The chain runs to 125 residues: Glycine cleavage system H protein (125 aa).

The Lipoyl-binding domain occupies 19 to 101 (EVTVGITDHA…YHEGWLVKLK (83 aa)). Lys-60 is modified (N6-lipoyllysine).

Belongs to the GcvH family. As to quaternary structure, the glycine cleavage system is composed of four proteins: P, T, L and H. (R)-lipoate serves as cofactor.

Functionally, the glycine cleavage system catalyzes the degradation of glycine. The H protein shuttles the methylamine group of glycine from the P protein to the T protein. The sequence is that of Glycine cleavage system H protein from Legionella pneumophila (strain Corby).